The following is a 242-amino-acid chain: Outer membrane protein class 4 (242 aa).

An N-terminal signal peptide occupies residues 1 to 22; it reads MTKQLKLSALFVALLASGTAVA. Tandem repeats lie at residues 69-70, 71-72, 73-74, 75-76, 77-78, 79-80, and 81-82. The interval 69–82 is 7 X 2 AA tandem repeats of X-P; the sequence is APEPEPEPEPAPAP. An OmpA-like domain is found at 92 to 229; sequence YVDETISLSA…RVDVKIRSIV (138 aa). Residues Cys-191 and Cys-214 are joined by a disulfide bond.

It belongs to the outer membrane OOP (TC 1.B.6) superfamily. The C-terminus exists in a monomer-dimer equilibrium.

It localises to the cell outer membrane. The chain is Outer membrane protein class 4 from Neisseria meningitidis serogroup B (strain ATCC BAA-335 / MC58).